Reading from the N-terminus, the 373-residue chain is UDP-N-acetylglucosamine--N-acetylmuramyl-(pentapeptide) pyrophosphoryl-undecaprenol N-acetylglucosamine transferase (373 aa).

Residues 13–15, asparagine 124, arginine 164, serine 192, and glutamine 293 each bind UDP-N-acetyl-alpha-D-glucosamine; that span reads TGG.

It belongs to the glycosyltransferase 28 family. MurG subfamily.

It is found in the cell inner membrane. The catalysed reaction is di-trans,octa-cis-undecaprenyl diphospho-N-acetyl-alpha-D-muramoyl-L-alanyl-D-glutamyl-meso-2,6-diaminopimeloyl-D-alanyl-D-alanine + UDP-N-acetyl-alpha-D-glucosamine = di-trans,octa-cis-undecaprenyl diphospho-[N-acetyl-alpha-D-glucosaminyl-(1-&gt;4)]-N-acetyl-alpha-D-muramoyl-L-alanyl-D-glutamyl-meso-2,6-diaminopimeloyl-D-alanyl-D-alanine + UDP + H(+). The protein operates within cell wall biogenesis; peptidoglycan biosynthesis. Functionally, cell wall formation. Catalyzes the transfer of a GlcNAc subunit on undecaprenyl-pyrophosphoryl-MurNAc-pentapeptide (lipid intermediate I) to form undecaprenyl-pyrophosphoryl-MurNAc-(pentapeptide)GlcNAc (lipid intermediate II). The polypeptide is UDP-N-acetylglucosamine--N-acetylmuramyl-(pentapeptide) pyrophosphoryl-undecaprenol N-acetylglucosamine transferase (Allorhizobium ampelinum (strain ATCC BAA-846 / DSM 112012 / S4) (Agrobacterium vitis (strain S4))).